A 388-amino-acid polypeptide reads, in one-letter code: Flap endonuclease 1 (388 aa).

An N-domain region spans residues 1–104; that stretch reads MGILGLSKLI…GELAKRAERR (104 aa). Aspartate 34 is a binding site for Mg(2+). The DNA site is built by arginine 47 and arginine 70. Residues aspartate 86, glutamate 158, glutamate 160, aspartate 179, and aspartate 181 each coordinate Mg(2+). An I-domain region spans residues 122–253; that stretch reads EIEKFNRRLV…KRAIELINSY (132 aa). Position 158 (glutamate 158) interacts with DNA. The DNA site is built by glycine 231 and aspartate 233. Aspartate 233 lines the Mg(2+) pocket. Residues 336–344 form an interaction with PCNA region; the sequence is TQVRLDSFF. The tract at residues 355–388 is disordered; the sequence is AAAKRKAEEAKKSANNKKAKIGGGGGAGRGRRPK.

It belongs to the XPG/RAD2 endonuclease family. FEN1 subfamily. Interacts with PCNA. Three molecules of FEN1 bind to one PCNA trimer with each molecule binding to one PCNA monomer. PCNA stimulates the nuclease activity without altering cleavage specificity. The cofactor is Mg(2+). Phosphorylated. Phosphorylation upon DNA damage induces relocalization to the nuclear plasma.

It is found in the nucleus. It localises to the nucleolus. The protein localises to the nucleoplasm. Its subcellular location is the mitochondrion. In terms of biological role, structure-specific nuclease with 5'-flap endonuclease and 5'-3' exonuclease activities involved in DNA replication and repair. During DNA replication, cleaves the 5'-overhanging flap structure that is generated by displacement synthesis when DNA polymerase encounters the 5'-end of a downstream Okazaki fragment. It enters the flap from the 5'-end and then tracks to cleave the flap base, leaving a nick for ligation. Also involved in the long patch base excision repair (LP-BER) pathway, by cleaving within the apurinic/apyrimidinic (AP) site-terminated flap. Acts as a genome stabilization factor that prevents flaps from equilibrating into structures that lead to duplications and deletions. Also possesses 5'-3' exonuclease activity on nicked or gapped double-stranded DNA, and exhibits RNase H activity. Also involved in replication and repair of rDNA and in repairing mitochondrial DNA. This Drosophila willistoni (Fruit fly) protein is Flap endonuclease 1.